Reading from the N-terminus, the 379-residue chain is Cobalt-precorrin-5B C(1)-methyltransferase (379 aa).

It belongs to the CbiD family.

It catalyses the reaction Co-precorrin-5B + S-adenosyl-L-methionine = Co-precorrin-6A + S-adenosyl-L-homocysteine. The protein operates within cofactor biosynthesis; adenosylcobalamin biosynthesis; cob(II)yrinate a,c-diamide from sirohydrochlorin (anaerobic route): step 6/10. Catalyzes the methylation of C-1 in cobalt-precorrin-5B to form cobalt-precorrin-6A. The sequence is that of Cobalt-precorrin-5B C(1)-methyltransferase from Edwardsiella ictaluri (strain 93-146).